The sequence spans 1808 residues: Tenascin (1808 aa).

The N-terminal stretch at 1–22 is a signal peptide; the sequence is MGLPSQVLACAILGLLYQHASG. A propeptide spanning residues 23-33 is cleaved from the precursor; that stretch reads GLIKRIIRQKR. Residue Asn-38 is glycosylated (N-linked (GlcNAc...) asparagine). O-linked (Xyl...) (chondroitin sulfate) serine glycosylation occurs at Ser-72. The stretch at 118–142 forms a coiled coil; sequence DIKDLLSRLEELEGLVSSLREQCAS. 2 N-linked (GlcNAc...) asparagine glycosylation sites follow: Asn-168 and Asn-186. An EGF-like 1; incomplete domain is found at 176–188; sequence CVCEPGWKGPNCS. 13 consecutive EGF-like domains span residues 188–219, 219–250, 250–281, 281–312, 312–343, 343–374, 374–405, 405–436, 436–467, 467–498, 498–529, 529–560, and 560–591; these read SEPACPRNCLNRGLCVRGKCICEEGFTGEDCS, SQAACPSDCNDQGKCVDGVCVCFEGYTGPDCG, GEELCPHGCGIHGRCVGGRCVCHEGFTGEDCN, NEPLCPNNCHNRGRCVDNECVCDEGYTGEDCG, GELICPNDCFDRGRCINGTCFCEEGYTGEDCG, GELTCPNNCNGNGRCENGLCVCHEGFVGDDCS, SQKRCPKDCNNRGHCVDGRCVCHEGYLGEDCG, GELRCPNDCHNRGRCINGQCVCDEGFIGEDCG, GELRCPNDCHNRGRCVNGQCECHEGFIGEDCG, GELRCPNDCNSHGRCVNGQCVCDEGYTGEDCG, GELRCPNDCHNRGRCVEGRCVCDNGFMGEDCG, GELSCPNDCHQHGRCVDGRCVCHEGFTGEDCR, and RERSCPNDCNNVGRCVEGRCVCEEGYMGIDCS. 39 disulfide bridges follow: Cys-192-Cys-202, Cys-196-Cys-207, Cys-209-Cys-218, Cys-223-Cys-233, Cys-227-Cys-238, Cys-240-Cys-249, Cys-254-Cys-264, Cys-258-Cys-269, Cys-271-Cys-280, Cys-285-Cys-295, Cys-289-Cys-300, Cys-302-Cys-311, Cys-316-Cys-326, Cys-320-Cys-331, Cys-333-Cys-342, Cys-347-Cys-357, Cys-351-Cys-362, Cys-364-Cys-373, Cys-378-Cys-388, Cys-382-Cys-393, Cys-395-Cys-404, Cys-409-Cys-419, Cys-413-Cys-424, Cys-426-Cys-435, Cys-440-Cys-450, Cys-444-Cys-455, Cys-457-Cys-466, Cys-471-Cys-481, Cys-475-Cys-486, Cys-488-Cys-497, Cys-502-Cys-512, Cys-506-Cys-517, Cys-519-Cys-528, Cys-533-Cys-543, Cys-537-Cys-548, Cys-550-Cys-559, Cys-564-Cys-574, Cys-568-Cys-579, and Cys-581-Cys-590. Asn-328 carries N-linked (GlcNAc...) asparagine glycosylation. 11 Fibronectin type-III domains span residues 595 to 685, 686 to 775, 776 to 866, 867 to 957, 958 to 1046, 1047 to 1138, 1139 to 1228, 1229 to 1318, 1319 to 1408, 1409 to 1495, and 1496 to 1584; these read PPTE…LPAP, EGLK…TKLD, APSQ…DLDA, PRNL…TDLD, NPKD…EEEP, ELGN…AHPE, VGEL…EAEP, EVDN…TVVG, SPKG…ALDS, PSGL…TGLD, and APKD…TGLL. 4 N-linked (GlcNAc...) asparagine glycosylation sites follow: Asn-603, Asn-643, Asn-751, and Asn-759. N-linked (GlcNAc...) asparagine glycosylation is found at Asn-1050, Asn-1090, Asn-1101, Asn-1112, Asn-1153, and Asn-1183. Asn-1416 is a glycosylation site (N-linked (GlcNAc...) asparagine). The Fibrinogen C-terminal domain maps to 1582-1797; sequence GLLYPYPKDC…FAEMKLRPSS (216 aa). N-linked (GlcNAc...) asparagine glycans are attached at residues Asn-1736 and Asn-1769.

The protein belongs to the tenascin family. Homohexamer; disulfide-linked. A homotrimer may be formed in the triple coiled-coil region and may be stabilized by disulfide rings at both ends. Two of such half-hexabrachions may be disulfide linked within the central globule. Interacts with CSPG5. As to expression, expressed in the brain.

It is found in the secreted. Its subcellular location is the extracellular space. The protein localises to the extracellular matrix. Extracellular matrix protein implicated in guidance of migrating neurons as well as axons during development, synaptic plasticity as well as neuronal regeneration. Ligand for integrins alpha-8/beta-1, alpha-9/beta-1, alpha-V/beta-3 and alpha-V/beta-6. This Gallus gallus (Chicken) protein is Tenascin (TNC).